Reading from the N-terminus, the 203-residue chain is Ribonuclease HII (203 aa).

The RNase H type-2 domain occupies 15-201 (LLVAGLDEAG…VAQAPLRFPE (187 aa)). 3 residues coordinate a divalent metal cation: D21, E22, and D111.

Belongs to the RNase HII family. Mn(2+) is required as a cofactor. Requires Mg(2+) as cofactor.

Its subcellular location is the cytoplasm. The catalysed reaction is Endonucleolytic cleavage to 5'-phosphomonoester.. In terms of biological role, endonuclease that specifically degrades the RNA of RNA-DNA hybrids. In Thermus thermophilus (strain ATCC BAA-163 / DSM 7039 / HB27), this protein is Ribonuclease HII.